A 247-amino-acid polypeptide reads, in one-letter code: Agamous-like MADS-box protein AGL28 (247 aa).

An MADS-box domain is found at 6–66 (LGRRKIELVK…GKAYSFGHPN (61 aa)). Residues 91-168 (TKLRIQMLNE…VDEKVAQLHH (78 aa)) are a coiled coil.

As to expression, expressed in roots, leaves and shoot apices.

Its subcellular location is the nucleus. Functionally, probable transcription factor that may function as a floral promoter operating upstream of known floral activators in the autonomous pathway. The sequence is that of Agamous-like MADS-box protein AGL28 from Arabidopsis thaliana (Mouse-ear cress).